The following is a 347-amino-acid chain: GMP reductase (347 aa).

108 to 131 (ADFEKTKQILDLNPALNFVCIDVA) contributes to the NADP(+) binding site. Positions 181 and 183 each coordinate K(+). Cys-186 serves as the catalytic Thioimidate intermediate. 216 to 239 (IVSDGGCTTPGDVAKAFGGGADFV) serves as a coordination point for NADP(+).

It belongs to the IMPDH/GMPR family. GuaC type 1 subfamily. Homotetramer.

It catalyses the reaction IMP + NH4(+) + NADP(+) = GMP + NADPH + 2 H(+). Functionally, catalyzes the irreversible NADPH-dependent deamination of GMP to IMP. It functions in the conversion of nucleobase, nucleoside and nucleotide derivatives of G to A nucleotides, and in maintaining the intracellular balance of A and G nucleotides. This Shigella flexneri serotype 5b (strain 8401) protein is GMP reductase.